A 443-amino-acid chain; its full sequence is Glutamyl-tRNA reductase (443 aa).

Substrate contacts are provided by residues 49-52, Ser109, 114-116, and Gln120; these read TCNR and EPQ. Cys50 functions as the Nucleophile in the catalytic mechanism. Position 189 to 194 (189 to 194) interacts with NADP(+); it reads GAGKMC. Positions 421–443 are disordered; the sequence is PDSQQTGGDSVEKDADSKQDLTS. The span at 430 to 443 shows a compositional bias: basic and acidic residues; it reads SVEKDADSKQDLTS.

Belongs to the glutamyl-tRNA reductase family. In terms of assembly, homodimer.

The enzyme catalyses (S)-4-amino-5-oxopentanoate + tRNA(Glu) + NADP(+) = L-glutamyl-tRNA(Glu) + NADPH + H(+). It functions in the pathway porphyrin-containing compound metabolism; protoporphyrin-IX biosynthesis; 5-aminolevulinate from L-glutamyl-tRNA(Glu): step 1/2. Catalyzes the NADPH-dependent reduction of glutamyl-tRNA(Glu) to glutamate 1-semialdehyde (GSA). In Syntrophotalea carbinolica (strain DSM 2380 / NBRC 103641 / GraBd1) (Pelobacter carbinolicus), this protein is Glutamyl-tRNA reductase.